The primary structure comprises 1608 residues: Protein REDUCED CHLOROPLAST COVERAGE 3 (1608 aa).

Basic residues predominate over residues 1-12; that stretch reads MAPRSSKGKSNN. Disordered regions lie at residues 1–22 and 278–303; these read MAPR…KKKR and VSES…GRNG. The 277-residue stretch at 288–564 folds into the Clu domain; the sequence is EDEHWGGNGG…KKETDVCGKP (277 aa). TPR repeat units follow at residues 848–881, 890–923, 932–965, and 974–1007; these read GRTL…MIAV, ACAY…NERE, MKSY…LHFT, and AATY…NKRL. Disordered regions lie at residues 1194 to 1226, 1238 to 1292, 1369 to 1400, 1466 to 1499, and 1531 to 1552; these read VEES…RQPD, HNRN…ASGA, KQES…KTSD, TPRS…VSVD, and PAAL…KDSA. The short motif at 1217–1224 is the Nuclear localization signal element; it reads GRKSRQRQ. 2 stretches are compositionally biased toward polar residues: residues 1242–1265 and 1373–1385; these read QDVQ…LSKS and QESA…LTSE. The segment covering 1535-1546 has biased composition (polar residues); it reads SKTSPEAESGGT.

The protein resides in the nucleus. The protein localises to the cytoplasm. It localises to the cytosol. Functionally, may act as the scaffold of a protein complex, which sequesters key factors that are required for the G2 to M transition in meristematic tissues. Together with REC2, REC3 and FMT/CLU, contributes to the establishment of the cellular volume devoted to the chloroplast compartment. The sequence is that of Protein REDUCED CHLOROPLAST COVERAGE 3 from Arabidopsis thaliana (Mouse-ear cress).